An 860-amino-acid chain; its full sequence is Leucine--tRNA ligase (860 aa).

The 'HIGH' region signature appears at 42 to 52 (PYPSGRLHMGH). Residues 619-623 (KMSKS) carry the 'KMSKS' region motif. Residue Lys622 coordinates ATP.

The protein belongs to the class-I aminoacyl-tRNA synthetase family.

It is found in the cytoplasm. The catalysed reaction is tRNA(Leu) + L-leucine + ATP = L-leucyl-tRNA(Leu) + AMP + diphosphate. The protein is Leucine--tRNA ligase of Citrobacter koseri (strain ATCC BAA-895 / CDC 4225-83 / SGSC4696).